The primary structure comprises 703 residues: Polyribonucleotide nucleotidyltransferase (703 aa).

Mg(2+) contacts are provided by Asp-489 and Asp-495. The KH domain maps to 556–615; the sequence is PTMIAMKIDTDKIRDVIGKGGATIRAICEETKASIDIEDDGSIKIFGETKEAAEAARQRV. Positions 625–693 constitute an S1 motif domain; that stretch reads GKIYVGKVER…NRGRIKLSIK (69 aa).

Belongs to the polyribonucleotide nucleotidyltransferase family. Component of the RNA degradosome, which is a multiprotein complex involved in RNA processing and mRNA degradation. The cofactor is Mg(2+).

It is found in the cytoplasm. The enzyme catalyses RNA(n+1) + phosphate = RNA(n) + a ribonucleoside 5'-diphosphate. Involved in mRNA degradation. Catalyzes the phosphorolysis of single-stranded polyribonucleotides processively in the 3'- to 5'-direction. The sequence is that of Polyribonucleotide nucleotidyltransferase from Pseudomonas fluorescens (strain ATCC BAA-477 / NRRL B-23932 / Pf-5).